The primary structure comprises 25 residues: ATP-dependent 6-phosphofructokinase 2 (25 aa).

ATP is bound at residue G11.

It belongs to the phosphofructokinase type A (PFKA) family. ATP-dependent PFK group I subfamily. Prokaryotic clade 'B1' sub-subfamily. Homotetramer. Requires Mg(2+) as cofactor.

The protein resides in the cytoplasm. It catalyses the reaction beta-D-fructose 6-phosphate + ATP = beta-D-fructose 1,6-bisphosphate + ADP + H(+). It functions in the pathway carbohydrate degradation; glycolysis; D-glyceraldehyde 3-phosphate and glycerone phosphate from D-glucose: step 3/4. Its activity is regulated as follows. In contrast with PFK1 this enzyme is not affected by phosphoenolpyruvate. Catalyzes the phosphorylation of D-fructose 6-phosphate to fructose 1,6-bisphosphate by ATP, the first committing step of glycolysis. The protein is ATP-dependent 6-phosphofructokinase 2 (pfkA2) of Thermus thermophilus (strain ATCC 27634 / DSM 579 / HB8).